The sequence spans 257 residues: Lysine-rich coiled-coil protein 1 (257 aa).

The segment at 145 to 257 is disordered; the sequence is NTSAHQASYK…MLWDQSILGF (113 aa). Basic residues predominate over residues 152 to 162; the sequence is SYKHIHQKRKR. Composition is skewed to basic and acidic residues over residues 163 to 176, 183 to 193, 200 to 212, and 219 to 228; these read HTEE…EERP, ACEEIDLDKYK, TEAE…TEKL, and RSRDVASKKE. Residues 210-248 adopt a coiled-coil conformation; it reads EKLKNRKEKRSRDVASKKEERKRRKEKKEQGQERTEEEM.

This Bos taurus (Bovine) protein is Lysine-rich coiled-coil protein 1 (KRCC1).